Consider the following 268-residue polypeptide: Putative cysteine-rich repeat secretory protein 5 (268 aa).

Residues 1–24 form the signal peptide; it reads MTGINTHFAVALFCFFSFSLRAMS. 2 consecutive Gnk2-homologous domains span residues 27-129 and 135-248; these read SQML…NVSF and DVPS…ISAL.

The protein belongs to the cysteine-rich repeat secretory protein family.

It is found in the secreted. The sequence is that of Putative cysteine-rich repeat secretory protein 5 (CRRSP5) from Arabidopsis thaliana (Mouse-ear cress).